A 61-amino-acid polypeptide reads, in one-letter code: DNA-directed RNA polymerase subunit 12-like protein (61 aa).

Positions 21, 24, 38, and 41 each coordinate Zn(2+).

Belongs to the archaeal Rpo12/eukaryotic RPC10 RNA polymerase subunit family.

The protein resides in the nucleus. This chain is DNA-directed RNA polymerase subunit 12-like protein (NRPB12L), found in Arabidopsis thaliana (Mouse-ear cress).